A 416-amino-acid chain; its full sequence is Elongation factor 1-gamma 3 (416 aa).

In terms of domain architecture, GST N-terminal spans 1 to 82 (MALVLHCGSG…YVARLKDNSS (82 aa)). Positions 87-215 (SLIDYSHIEQ…FKQAESVPPV (129 aa)) constitute a GST C-terminal domain. Positions 213-263 (PPVQKKAAPPKESKAKEAKKEAPKEAPKPKVEASEEEEAPKPKPKNPLDLL) are disordered. A compositionally biased stretch (basic and acidic residues) spans 221-245 (PPKESKAKEAKKEAPKEAPKPKVEA). One can recognise an EF-1-gamma C-terminal domain in the interval 256–416 (PKNPLDLLPP…EDLLDAKCFK (161 aa)).

EF-1 is composed of four subunits: alpha, beta, delta, and gamma.

Probably plays a role in anchoring the complex to other cellular components. This chain is Elongation factor 1-gamma 3, found in Oryza sativa subsp. japonica (Rice).